A 184-amino-acid chain; its full sequence is Photosystem I assembly protein Ycf4 (184 aa).

2 consecutive transmembrane segments (helical) span residues 19-39 (ISNFCWAFLLFLGSLGFVLVG) and 64-84 (LVMSFYGIAGLFISSYLWCTI).

Belongs to the Ycf4 family.

It is found in the plastid. Its subcellular location is the chloroplast thylakoid membrane. Its function is as follows. Seems to be required for the assembly of the photosystem I complex. The sequence is that of Photosystem I assembly protein Ycf4 from Oenothera elata subsp. hookeri (Hooker's evening primrose).